The primary structure comprises 46 residues: Large ribosomal subunit protein bL34c (46 aa).

It belongs to the bacterial ribosomal protein bL34 family.

The protein resides in the plastid. It is found in the chloroplast. This is Large ribosomal subunit protein bL34c from Pyropia yezoensis (Susabi-nori).